The primary structure comprises 343 residues: Thiamine-phosphate synthase (343 aa).

A unknown region spans residues 1-123; the sequence is MQQASPTAIA…GACCKQLRYR (123 aa). Residues 124–343 are thiamine-phosphate synthase; it reads VYALESGLLG…LLTQLSRINP (220 aa). 4-amino-2-methyl-5-(diphosphooxymethyl)pyrimidine-binding positions include 171–175 and Asn-203; that span reads QYRDK. Asp-204 and Asp-223 together coordinate Mg(2+). Position 242 (Ser-242) interacts with 4-amino-2-methyl-5-(diphosphooxymethyl)pyrimidine. 268 to 270 contributes to the 2-[(2R,5Z)-2-carboxy-4-methylthiazol-5(2H)-ylidene]ethyl phosphate binding site; that stretch reads TPT. Lys-271 is a binding site for 4-amino-2-methyl-5-(diphosphooxymethyl)pyrimidine. Position 298 (Gly-298) interacts with 2-[(2R,5Z)-2-carboxy-4-methylthiazol-5(2H)-ylidene]ethyl phosphate.

It belongs to the thiamine-phosphate synthase family. Requires Mg(2+) as cofactor.

The enzyme catalyses 2-[(2R,5Z)-2-carboxy-4-methylthiazol-5(2H)-ylidene]ethyl phosphate + 4-amino-2-methyl-5-(diphosphooxymethyl)pyrimidine + 2 H(+) = thiamine phosphate + CO2 + diphosphate. It catalyses the reaction 2-(2-carboxy-4-methylthiazol-5-yl)ethyl phosphate + 4-amino-2-methyl-5-(diphosphooxymethyl)pyrimidine + 2 H(+) = thiamine phosphate + CO2 + diphosphate. The catalysed reaction is 4-methyl-5-(2-phosphooxyethyl)-thiazole + 4-amino-2-methyl-5-(diphosphooxymethyl)pyrimidine + H(+) = thiamine phosphate + diphosphate. Its pathway is cofactor biosynthesis; thiamine diphosphate biosynthesis; thiamine phosphate from 4-amino-2-methyl-5-diphosphomethylpyrimidine and 4-methyl-5-(2-phosphoethyl)-thiazole: step 1/1. Its function is as follows. Condenses 4-methyl-5-(beta-hydroxyethyl)thiazole monophosphate (THZ-P) and 2-methyl-4-amino-5-hydroxymethyl pyrimidine pyrophosphate (HMP-PP) to form thiamine monophosphate (TMP). The chain is Thiamine-phosphate synthase from Synechocystis sp. (strain ATCC 27184 / PCC 6803 / Kazusa).